The primary structure comprises 376 residues: Succinyl-diaminopimelate desuccinylase (376 aa).

Histidine 66 lines the Zn(2+) pocket. Aspartate 68 is a catalytic residue. Aspartate 99 lines the Zn(2+) pocket. Residue glutamate 133 is the Proton acceptor of the active site. 3 residues coordinate Zn(2+): glutamate 134, glutamate 162, and histidine 349.

Belongs to the peptidase M20A family. DapE subfamily. As to quaternary structure, homodimer. Requires Zn(2+) as cofactor. Co(2+) serves as cofactor.

The enzyme catalyses N-succinyl-(2S,6S)-2,6-diaminopimelate + H2O = (2S,6S)-2,6-diaminopimelate + succinate. The protein operates within amino-acid biosynthesis; L-lysine biosynthesis via DAP pathway; LL-2,6-diaminopimelate from (S)-tetrahydrodipicolinate (succinylase route): step 3/3. Functionally, catalyzes the hydrolysis of N-succinyl-L,L-diaminopimelic acid (SDAP), forming succinate and LL-2,6-diaminopimelate (DAP), an intermediate involved in the bacterial biosynthesis of lysine and meso-diaminopimelic acid, an essential component of bacterial cell walls. The protein is Succinyl-diaminopimelate desuccinylase of Buchnera aphidicola subsp. Cinara cedri (strain Cc).